A 505-amino-acid chain; its full sequence is MNLVNPSILVACILSFCLGAIGCLAFSPFDIWLIAYLSAAGLIWAATLVERKTAMLATFAWSIGYFGVGVQWVNVSMTQFGGVPVIVSYLAVLLLASYLGLYNLLFSYLARRFGLISPFVLASLFTFTEYLRGVVFTGFPWLQFGYTQIDSPFAQLAPIFGVEGLTFLVILLSSYLVDIVKNPTRKIATFTKIAVIIGFSLASNLLQFVQIDQQKPPVKVALIQANIEQQLKWDPAHFENTLRTYQQLINSSLAENEVIILPESAIPALESKINPLLNQLQKMAAAKNTEIIIGTLYENEQQQLFNSALVLGNQTKPYQLHQSLRYNKHHLVPFGEYVPFGSLLDWMREVFILPVNLAKGPFIQPALFTNKGKFNMAICYEVIFGHQLQQNQLAQQADYLITITNDAWFGDSIGPWQHLQMARMRALELGKPLLRAANTGITAVVGFDGKVIKKLPQFETNTLTAEIATTKGHTLFGQFGHWLIYSLSFICVAFGLFRRQKHKKH.

7 helical membrane passes run 6–26 (PSIL…CLAF), 29–49 (FDIW…ATLV), 53–73 (TAML…VQWV), 80–100 (FGGV…SYLG), 119–139 (FVLA…FTGF), 152–172 (PFAQ…VILL), and 189–209 (TFTK…LQFV). One can recognise a CN hydrolase domain in the interval 223–469 (IQANIEQQLK…TNTLTAEIAT (247 aa)). Glu-263 functions as the Proton acceptor in the catalytic mechanism. The active site involves Lys-328. Cys-379 serves as the catalytic Nucleophile. A helical transmembrane segment spans residues 475-495 (LFGQFGHWLIYSLSFICVAFG).

This sequence belongs to the CN hydrolase family. Apolipoprotein N-acyltransferase subfamily.

The protein resides in the cell inner membrane. The enzyme catalyses N-terminal S-1,2-diacyl-sn-glyceryl-L-cysteinyl-[lipoprotein] + a glycerophospholipid = N-acyl-S-1,2-diacyl-sn-glyceryl-L-cysteinyl-[lipoprotein] + a 2-acyl-sn-glycero-3-phospholipid + H(+). It functions in the pathway protein modification; lipoprotein biosynthesis (N-acyl transfer). Its function is as follows. Catalyzes the phospholipid dependent N-acylation of the N-terminal cysteine of apolipoprotein, the last step in lipoprotein maturation. This Haemophilus ducreyi (strain 35000HP / ATCC 700724) protein is Apolipoprotein N-acyltransferase.